We begin with the raw amino-acid sequence, 143 residues long: Large ribosomal subunit protein uL13 (143 aa).

Belongs to the universal ribosomal protein uL13 family. In terms of assembly, part of the 50S ribosomal subunit.

This protein is one of the early assembly proteins of the 50S ribosomal subunit, although it is not seen to bind rRNA by itself. It is important during the early stages of 50S assembly. This Coprothermobacter proteolyticus (strain ATCC 35245 / DSM 5265 / OCM 4 / BT) protein is Large ribosomal subunit protein uL13.